The primary structure comprises 382 residues: Anhydro-N-acetylmuramic acid kinase (382 aa).

22–29 (GTSMDGVD) lines the ATP pocket.

This sequence belongs to the anhydro-N-acetylmuramic acid kinase family.

It catalyses the reaction 1,6-anhydro-N-acetyl-beta-muramate + ATP + H2O = N-acetyl-D-muramate 6-phosphate + ADP + H(+). Its pathway is amino-sugar metabolism; 1,6-anhydro-N-acetylmuramate degradation. It participates in cell wall biogenesis; peptidoglycan recycling. Functionally, catalyzes the specific phosphorylation of 1,6-anhydro-N-acetylmuramic acid (anhMurNAc) with the simultaneous cleavage of the 1,6-anhydro ring, generating MurNAc-6-P. Is required for the utilization of anhMurNAc either imported from the medium or derived from its own cell wall murein, and thus plays a role in cell wall recycling. The sequence is that of Anhydro-N-acetylmuramic acid kinase from Burkholderia orbicola (strain MC0-3).